The sequence spans 109 residues: Nucleoid-associated protein Spea_1509 (109 aa).

The segment at Asn87–Phe109 is disordered.

Belongs to the YbaB/EbfC family. As to quaternary structure, homodimer.

It is found in the cytoplasm. The protein resides in the nucleoid. Its function is as follows. Binds to DNA and alters its conformation. May be involved in regulation of gene expression, nucleoid organization and DNA protection. The protein is Nucleoid-associated protein Spea_1509 of Shewanella pealeana (strain ATCC 700345 / ANG-SQ1).